We begin with the raw amino-acid sequence, 253 residues long: Imidazole glycerol phosphate synthase subunit HisF (253 aa).

Residues D11 and D130 contribute to the active site.

This sequence belongs to the HisA/HisF family. Heterodimer of HisH and HisF.

The protein resides in the cytoplasm. It catalyses the reaction 5-[(5-phospho-1-deoxy-D-ribulos-1-ylimino)methylamino]-1-(5-phospho-beta-D-ribosyl)imidazole-4-carboxamide + L-glutamine = D-erythro-1-(imidazol-4-yl)glycerol 3-phosphate + 5-amino-1-(5-phospho-beta-D-ribosyl)imidazole-4-carboxamide + L-glutamate + H(+). The protein operates within amino-acid biosynthesis; L-histidine biosynthesis; L-histidine from 5-phospho-alpha-D-ribose 1-diphosphate: step 5/9. In terms of biological role, IGPS catalyzes the conversion of PRFAR and glutamine to IGP, AICAR and glutamate. The HisF subunit catalyzes the cyclization activity that produces IGP and AICAR from PRFAR using the ammonia provided by the HisH subunit. This chain is Imidazole glycerol phosphate synthase subunit HisF, found in Clostridium botulinum (strain Langeland / NCTC 10281 / Type F).